The sequence spans 198 residues: MSKLICVAKIGAAHGVRGEVRLWTFTEDPLAVLHYGPLTTKDGSRSFEVAKAREAKDHLVATIKGVTDRNAAERLNGLELYVPRDRLPETDDDEYYHADLIGLAAETTAGAPLGRVLAIHNFGAGDIIEIAPPSGSTLMLPFTNAVVPTVDLAGGRVIIELPAEIEGEDQDSSDNAGSPEGDAAASNSARHPRESGDP.

The PRC barrel domain maps to 92 to 168 (DDEYYHADLI…IELPAEIEGE (77 aa)). A compositionally biased stretch (acidic residues) spans 163 to 172 (AEIEGEDQDS). The tract at residues 163–198 (AEIEGEDQDSSDNAGSPEGDAAASNSARHPRESGDP) is disordered.

The protein belongs to the RimM family. Binds ribosomal protein uS19.

It localises to the cytoplasm. An accessory protein needed during the final step in the assembly of 30S ribosomal subunit, possibly for assembly of the head region. Essential for efficient processing of 16S rRNA. May be needed both before and after RbfA during the maturation of 16S rRNA. It has affinity for free ribosomal 30S subunits but not for 70S ribosomes. The protein is Ribosome maturation factor RimM of Bradyrhizobium sp. (strain BTAi1 / ATCC BAA-1182).